We begin with the raw amino-acid sequence, 306 residues long: Ornithine carbamoyltransferase (306 aa).

Residues 51–54 (STRT), glutamine 78, arginine 102, and 129–132 (HPCQ) each bind carbamoyl phosphate. L-ornithine contacts are provided by residues asparagine 160, aspartate 223, and 227–228 (SM). Carbamoyl phosphate is bound by residues 263–264 (CL) and arginine 291.

This sequence belongs to the aspartate/ornithine carbamoyltransferase superfamily. OTCase family.

It is found in the cytoplasm. The catalysed reaction is carbamoyl phosphate + L-ornithine = L-citrulline + phosphate + H(+). Its pathway is amino-acid biosynthesis; L-arginine biosynthesis; L-arginine from L-ornithine and carbamoyl phosphate: step 1/3. Its function is as follows. Reversibly catalyzes the transfer of the carbamoyl group from carbamoyl phosphate (CP) to the N(epsilon) atom of ornithine (ORN) to produce L-citrulline. This chain is Ornithine carbamoyltransferase, found in Trichormus variabilis (strain ATCC 29413 / PCC 7937) (Anabaena variabilis).